A 195-amino-acid polypeptide reads, in one-letter code: Myosin regulatory light chain, striated muscle, 25 kDa isoform (195 aa).

Residues 1-17 are compositionally biased toward basic and acidic residues; sequence AKDKEKKEKKDKKKDDA. Residues 1–39 form a disordered region; that stretch reads AKDKEKKEKKDKKKDDAPAEEAPAAAAAPAEEAAPTPSA. Over residues 20–39 the composition is skewed to low complexity; that stretch reads EEAPAAAAAPAEEAAPTPSA. EF-hand domains follow at residues 55–90 and 124–159; these read NQIQ…IGRE and DTEG…VGDQ. Residues D68, D70, D72, and D79 each coordinate Ca(2+).

Myosin is a hexamer of 2 heavy chains and 4 light chains.

Plays an important role in regulation of muscle cell contractile activity. This is Myosin regulatory light chain, striated muscle, 25 kDa isoform from Lumbricus terrestris (Common earthworm).